A 90-amino-acid polypeptide reads, in one-letter code: Small ribosomal subunit protein bS16 (90 aa).

It belongs to the bacterial ribosomal protein bS16 family.

This is Small ribosomal subunit protein bS16 from Clostridioides difficile (strain 630) (Peptoclostridium difficile).